The sequence spans 440 residues: Glutamate--tRNA ligase 1 (440 aa).

The 'HIGH' region motif lies at 7 to 17 (PSPTGYLHVGN). A 'KMSKS' region motif is present at residues 238–242 (KISKR). Lys241 is an ATP binding site.

This sequence belongs to the class-I aminoacyl-tRNA synthetase family. Glutamate--tRNA ligase type 1 subfamily. Monomer.

The protein resides in the cytoplasm. It catalyses the reaction tRNA(Glu) + L-glutamate + ATP = L-glutamyl-tRNA(Glu) + AMP + diphosphate. In terms of biological role, catalyzes the attachment of glutamate to tRNA(Glu) in a two-step reaction: glutamate is first activated by ATP to form Glu-AMP and then transferred to the acceptor end of tRNA(Glu). This is Glutamate--tRNA ligase 1 from Wolbachia sp. subsp. Brugia malayi (strain TRS).